Reading from the N-terminus, the 97-residue chain is Large ribosomal subunit protein uL23 (97 aa).

The protein belongs to the universal ribosomal protein uL23 family. In terms of assembly, part of the 50S ribosomal subunit. Contacts protein L29, and trigger factor when it is bound to the ribosome.

In terms of biological role, one of the early assembly proteins it binds 23S rRNA. One of the proteins that surrounds the polypeptide exit tunnel on the outside of the ribosome. Forms the main docking site for trigger factor binding to the ribosome. In Brucella melitensis biotype 2 (strain ATCC 23457), this protein is Large ribosomal subunit protein uL23.